Consider the following 441-residue polypeptide: Hydroxycinnamoyl-CoA:5-hydroxyanthranilate N-hydroxycinnamoyltransferase HHT1 (441 aa).

Residues His-158 and Asp-388 each act as proton acceptor in the active site.

Belongs to the plant acyltransferase family.

The catalysed reaction is 5-hydroxyanthranilate + (E)-4-coumaroyl-CoA = avenanthramide A + CoA. The enzyme catalyses 5-hydroxyanthranilate + (E)-caffeoyl-CoA = avenanthramide C + CoA. Involved in the biosynthesis of avenanthramide phytoalexins, which are phenolic alkaloids found mainly in oats. Catalyzes the N-acylation of 5-hydroxyanthranilate with 4-coumaroyl-CoA or caffeoyl-CoA as acyl donors, forming avenanthramide A and avenanthramide C, respectively. Does not accept feruloyl-CoA as a substrate. The protein is Hydroxycinnamoyl-CoA:5-hydroxyanthranilate N-hydroxycinnamoyltransferase HHT1 of Avena sativa (Oat).